Consider the following 214-residue polypeptide: 3-isopropylmalate dehydratase small subunit (214 aa).

The protein belongs to the LeuD family. LeuD type 1 subfamily. As to quaternary structure, heterodimer of LeuC and LeuD.

It carries out the reaction (2R,3S)-3-isopropylmalate = (2S)-2-isopropylmalate. Its pathway is amino-acid biosynthesis; L-leucine biosynthesis; L-leucine from 3-methyl-2-oxobutanoate: step 2/4. Its function is as follows. Catalyzes the isomerization between 2-isopropylmalate and 3-isopropylmalate, via the formation of 2-isopropylmaleate. This is 3-isopropylmalate dehydratase small subunit from Pseudomonas putida (strain GB-1).